We begin with the raw amino-acid sequence, 352 residues long: Large ribosomal subunit protein uL5m (352 aa).

The disordered stretch occupies residues 28-109; that stretch reads STQTGAGAAA…HPIQSPPSSD (82 aa). The segment covering 63-80 has biased composition (basic and acidic residues); that stretch reads EEDKKEFRPWKRAADRKA.

The protein belongs to the universal ribosomal protein uL5 family. As to quaternary structure, component of the mitochondrial large ribosomal subunit (mt-LSU). Mature N.crassa 74S mitochondrial ribosomes consist of a small (37S) and a large (54S) subunit. The 37S small subunit contains a 16S ribosomal RNA (16S mt-rRNA) and 32 different proteins. The 54S large subunit contains a 23S rRNA (23S mt-rRNA) and 42 different proteins. Unlike bacterial L5, uL5m does not bind zinc.

The protein resides in the mitochondrion. Functionally, component of the mitochondrial ribosome (mitoribosome), a dedicated translation machinery responsible for the synthesis of mitochondrial genome-encoded proteins, including at least some of the essential transmembrane subunits of the mitochondrial respiratory chain. The mitoribosomes are attached to the mitochondrial inner membrane and translation products are cotranslationally integrated into the membrane. This chain is Large ribosomal subunit protein uL5m (mrpl7), found in Neurospora crassa (strain ATCC 24698 / 74-OR23-1A / CBS 708.71 / DSM 1257 / FGSC 987).